The following is an 87-amino-acid chain: Small ribosomal subunit protein bS21 (87 aa).

Basic and acidic residues predominate over residues 35–52 (HYEKPSEKKAREKAEAVR). A disordered region spans residues 35–87 (HYEKPSEKKAREKAEAVRRARKLARKKLQREGLLPSKPKPAFGADRRPSAAAR). Residues 53–62 (RARKLARKKL) show a composition bias toward basic residues. The span at 78-87 (ADRRPSAAAR) shows a compositional bias: basic and acidic residues.

This is Small ribosomal subunit protein bS21 from Rhodopseudomonas palustris (strain ATCC BAA-98 / CGA009).